The sequence spans 209 residues: Large ribosomal subunit protein uL1 (209 aa).

This sequence belongs to the universal ribosomal protein uL1 family. In terms of assembly, part of the 50S ribosomal subunit.

Binds directly to 23S rRNA. The L1 stalk is quite mobile in the ribosome, and is involved in E site tRNA release. Functionally, protein L1 is also a translational repressor protein, it controls the translation of the L11 operon by binding to its mRNA. The sequence is that of Large ribosomal subunit protein uL1 (rplA) from Neorickettsia sennetsu (strain ATCC VR-367 / Miyayama) (Ehrlichia sennetsu).